Reading from the N-terminus, the 102-residue chain is Urease subunit beta (102 aa).

This sequence belongs to the urease beta subunit family. In terms of assembly, heterotrimer of UreA (gamma), UreB (beta) and UreC (alpha) subunits. Three heterotrimers associate to form the active enzyme.

It localises to the cytoplasm. It carries out the reaction urea + 2 H2O + H(+) = hydrogencarbonate + 2 NH4(+). The protein operates within nitrogen metabolism; urea degradation; CO(2) and NH(3) from urea (urease route): step 1/1. The polypeptide is Urease subunit beta (Pseudomonas savastanoi pv. phaseolicola (strain 1448A / Race 6) (Pseudomonas syringae pv. phaseolicola (strain 1448A / Race 6))).